A 592-amino-acid polypeptide reads, in one-letter code: Alanine aminotransferase, mitochondrial (592 aa).

The transit peptide at 1-64 (MLSLSAKNHF…RKVRPVLQRH (64 aa)) directs the protein to the mitochondrion. A Phosphoserine modification is found at S77. Positions 258, 259, 284, 340, and 409 each coordinate pyridoxal 5'-phosphate. Residue K412 is modified to N6-(pyridoxal phosphate)lysine. R421 is a pyridoxal 5'-phosphate binding site.

Belongs to the class-I pyridoxal-phosphate-dependent aminotransferase family. Alanine aminotransferase subfamily. As to quaternary structure, homodimer. Pyridoxal 5'-phosphate serves as cofactor.

It localises to the mitochondrion matrix. It catalyses the reaction L-alanine + 2-oxoglutarate = pyruvate + L-glutamate. The protein operates within amino-acid degradation; L-alanine degradation via transaminase pathway; pyruvate from L-alanine: step 1/1. Functionally, alanine aminotransferase involved in both alanine biosynthesis and utilization. Under respiratory conditions, constitutes the sole pathway for alanine biosynthesis and catabolism. Under fermentative conditions, it plays a catabolic role and alanine is mainly synthesized through an alternative pathway. This Saccharomyces cerevisiae (strain ATCC 204508 / S288c) (Baker's yeast) protein is Alanine aminotransferase, mitochondrial (ALT1).